Reading from the N-terminus, the 493-residue chain is Glutamate--tRNA ligase (493 aa).

The short motif at 10-20 is the 'HIGH' region element; that stretch reads PSPTGTPHVGL. The 'KMSKS' region signature appears at 254 to 258; that stretch reads KLSKR. Position 257 (K257) interacts with ATP.

It belongs to the class-I aminoacyl-tRNA synthetase family. Glutamate--tRNA ligase type 1 subfamily. As to quaternary structure, monomer.

The protein resides in the cytoplasm. The enzyme catalyses tRNA(Glu) + L-glutamate + ATP = L-glutamyl-tRNA(Glu) + AMP + diphosphate. In terms of biological role, catalyzes the attachment of glutamate to tRNA(Glu) in a two-step reaction: glutamate is first activated by ATP to form Glu-AMP and then transferred to the acceptor end of tRNA(Glu). The sequence is that of Glutamate--tRNA ligase from Corynebacterium efficiens (strain DSM 44549 / YS-314 / AJ 12310 / JCM 11189 / NBRC 100395).